The sequence spans 296 residues: Protein csh3 (296 aa).

The disordered stretch occupies residues 46–138 (ASPVTAPAAQ…PPSYPGPNTA (93 aa)). A compositionally biased stretch (basic and acidic residues) spans 93–103 (GEKRTPEEPRK). Residues 111-124 (QKQSEASSVNSSTE) show a composition bias toward polar residues. One can recognise an SH3 domain in the interval 140–199 (KNVERVLAMYDFPGPDAGDLGFHAGEVIIVLEHVNNDWWRGELNGKEGIFPSNYVRLLED). The tract at residues 202 to 246 (VKAQPPPPPPQQNYPPAASSSAPPMQYQQTAYPPQQAPYPPVQAY) is disordered. Over residues 205-214 (QPPPPPPQQN) the composition is skewed to pro residues. Over residues 215–235 (YPPAASSSAPPMQYQQTAYPP) the composition is skewed to low complexity.

This Schizosaccharomyces pombe (strain 972 / ATCC 24843) (Fission yeast) protein is Protein csh3 (csh3).